The sequence spans 313 residues: Methionyl-tRNA formyltransferase (313 aa).

110–113 (SLLP) is a (6S)-5,6,7,8-tetrahydrofolate binding site.

Belongs to the Fmt family.

The catalysed reaction is L-methionyl-tRNA(fMet) + (6R)-10-formyltetrahydrofolate = N-formyl-L-methionyl-tRNA(fMet) + (6S)-5,6,7,8-tetrahydrofolate + H(+). Its function is as follows. Attaches a formyl group to the free amino group of methionyl-tRNA(fMet). The formyl group appears to play a dual role in the initiator identity of N-formylmethionyl-tRNA by promoting its recognition by IF2 and preventing the misappropriation of this tRNA by the elongation apparatus. This chain is Methionyl-tRNA formyltransferase, found in Lysinibacillus sphaericus (strain C3-41).